A 294-amino-acid chain; its full sequence is Cytosolic Fe-S cluster assembly factor CFD1 (294 aa).

25–32 (GKGGVGKS) is a binding site for ATP. 2 residues coordinate [4Fe-4S] cluster: Cys214 and Cys217.

Belongs to the Mrp/NBP35 ATP-binding proteins family. NUBP2/CFD1 subfamily. As to quaternary structure, heterotetramer of 2 NBP35 and 2 CFD1 chains. It depends on [4Fe-4S] cluster as a cofactor.

The protein localises to the cytoplasm. Its function is as follows. Component of the cytosolic iron-sulfur (Fe/S) protein assembly (CIA) machinery. Required for maturation of extramitochondrial Fe-S proteins. The NBP35-CFD1 heterotetramer forms a Fe-S scaffold complex, mediating the de novo assembly of an Fe-S cluster and its transfer to target apoproteins. Required for biogenesis and export of both ribosomal subunits, which may reflect a role in assembly of the Fe/S clusters in RLI1, a protein which performs rRNA processing and ribosome export. This chain is Cytosolic Fe-S cluster assembly factor CFD1, found in Candida albicans (strain SC5314 / ATCC MYA-2876) (Yeast).